The following is a 557-amino-acid chain: Polypyrimidine tract-binding protein 1 (557 aa).

M1 carries the post-translational modification N-acetylmethionine. Phosphoserine is present on S16. RRM domains are found at residues 59–143 (RVIH…SSPN), 184–260 (LRII…FSKL), and 363–437 (SVLL…LSKH). Residue K65 forms a Glycyl lysine isopeptide (Lys-Gly) (interchain with G-Cter in SUMO2) linkage. Y127 carries the phosphotyrosine modification. The residue at position 138 (T138) is a Phosphothreonine. S141 bears the Phosphoserine mark. K218 is covalently cross-linked (Glycyl lysine isopeptide (Lys-Gly) (interchain with G-Cter in SUMO2)). The tract at residues 437–460 (HQSVQLPREGQEDQGLTKDYGNSP) is disordered. Phosphoserine is present on S459. Positions 480-555 (ATLHLSNIPP…HHLRVSFSKS (76 aa)) constitute an RRM 4 domain.

As to quaternary structure, monomer. Part of a ternary complex containing KHSRP, PTBP1, PTBP2 and HNRPH1. Interacts with RAVER1 and SFPQ.

It localises to the nucleus. Plays a role in pre-mRNA splicing and in the regulation of alternative splicing events. Activates exon skipping of its own pre-mRNA during muscle cell differentiation. Binds to the polypyrimidine tract of introns. May promote RNA looping when bound to two separate polypyrimidine tracts in the same pre-mRNA. May promote the binding of U2 snRNP to pre-mRNA. Cooperates with RAVER1 to modulate switching between mutually exclusive exons during maturation of the TPM1 pre-mRNA. Represses the splicing of MAPT/Tau exon 10. Binds to polypyrimidine-rich controlling element (PCE) of CFTR and promotes exon skipping of CFTR exon 9, thereby antagonizing TIA1 and its role in exon inclusion of CFTR exon 9. Plays a role in the splicing of pyruvate kinase PKM by binding repressively to a polypyrimidine tract flanking PKM exon 9, inhibiting exon 9 inclusion and resulting in exon 10 inclusion and production of the PKM M2 isoform. This Bos taurus (Bovine) protein is Polypyrimidine tract-binding protein 1 (PTBP1).